Here is a 1579-residue protein sequence, read N- to C-terminus: DNA-directed RNA polymerase subunit beta' (1579 aa).

4 residues coordinate Zn(2+): Cys-65, Cys-67, Cys-80, and Cys-83. Residues Asp-601, Asp-603, and Asp-605 each contribute to the Mg(2+) site. Zn(2+) is bound by residues Cys-938, Cys-1012, Cys-1019, and Cys-1022.

The protein belongs to the RNA polymerase beta' chain family. In terms of assembly, the RNAP catalytic core consists of 2 alpha, 1 beta, 1 beta' and 1 omega subunit. When a sigma factor is associated with the core the holoenzyme is formed, which can initiate transcription. Mg(2+) serves as cofactor. Zn(2+) is required as a cofactor.

The catalysed reaction is RNA(n) + a ribonucleoside 5'-triphosphate = RNA(n+1) + diphosphate. DNA-dependent RNA polymerase catalyzes the transcription of DNA into RNA using the four ribonucleoside triphosphates as substrates. In Sulfurihydrogenibium sp. (strain YO3AOP1), this protein is DNA-directed RNA polymerase subunit beta'.